We begin with the raw amino-acid sequence, 386 residues long: N-acetylneuraminate epimerase (386 aa).

Residues 1 to 29 (MGMQMKNFKKMMTLMALCFSVAITTSGYA) form the signal peptide. Kelch repeat units lie at residues 51-95 (VIYV…VFLN), 97-149 (ELYV…VKLN), 151-186 (TMVL…KVIY), 187-232 (NYFN…VMGN), 235-284 (LMLI…LAGA), 306-355 (QNYT…SYGD), and 357-386 (VFLI…LLIK). E241 functions as the Proton acceptor in the catalytic mechanism.

This sequence belongs to the NanM family. Homodimer.

Its subcellular location is the periplasm. It carries out the reaction N-acetyl-alpha-neuraminate = N-acetyl-beta-neuraminate. Converts alpha-N-acetylneuranimic acid (Neu5Ac) to the beta-anomer, accelerating the equilibrium between the alpha- and beta-anomers. Probably facilitates sialidase-negative bacteria to compete successfully for limited amounts of extracellular Neu5Ac, which is likely taken up in the beta-anomer. In addition, the rapid removal of sialic acid from solution might be advantageous to the bacterium to damp down host responses. This is N-acetylneuraminate epimerase from Salmonella typhimurium (strain LT2 / SGSC1412 / ATCC 700720).